A 611-amino-acid polypeptide reads, in one-letter code: Serine protease FAM111A (611 aa).

The PIP-box motif lies at 16 to 28; that stretch reads KCNMKIEHYFSPV. K20 participates in a covalent cross-link: Glycyl lysine isopeptide (Lys-Gly) (interchain with G-Cter in SUMO2). S26 is modified (phosphoserine). Residues K30 and K65 each participate in a glycyl lysine isopeptide (Lys-Gly) (interchain with G-Cter in SUMO2) cross-link. The interval 44 to 73 is disordered; it reads ESRGDPRATTNTQAQRFHSPKKNPEDQTMP. Positions 336 to 611 are interaction with SV40 large T antigen; the sequence is KVTKNSSSIK…DVEMMSDEDL (276 aa). Catalysis depends on charge relay system residues H385, D439, and S541.

It belongs to the FAM111 family. As to quaternary structure, interacts (via PIP-box) with PCNA; then interaction is direct. (Microbial infection) Interacts with SV40 virus large T antigen and this interaction is required for efficient viral replication and sustained viral gene expression in restrictive cell types. In terms of assembly, (Microbial infection) Interacts with vaccinia virus protein OPG079; this interaction promotes the degradation of OPG079. Autocatalytically cleaved; activating the protein. Autocatalytic cleavage takes place in trans.

The protein localises to the nucleus. It localises to the chromosome. Its subcellular location is the cytoplasm. Functionally, single-stranded DNA-binding serine protease that mediates the proteolytic cleavage of covalent DNA-protein cross-links (DPCs) during DNA synthesis, thereby playing a key role in maintaining genomic integrity. DPCs are highly toxic DNA lesions that interfere with essential chromatin transactions, such as replication and transcription, and which are induced by reactive agents, such as UV light or formaldehyde. Protects replication fork from stalling by removing DPCs, such as covalently trapped topoisomerase 1 (TOP1) adducts on DNA lesion, or poly(ADP-ribose) polymerase 1 (PARP1)-DNA complexes trapped by PARP inhibitors. Required for PCNA loading on replication sites. Promotes S-phase entry and DNA synthesis. Also acts as a restriction factor for some viruses including SV40 polyomavirus and vaccinia virus. Mechanistically, affects nuclear barrier function during viral replication by mediating the disruption of the nuclear pore complex (NPC) via its protease activity. In turn, interacts with vaccinia virus DNA-binding protein OPG079 in the cytoplasm and promotes its degradation without the need of its protease activity but through autophagy. This Homo sapiens (Human) protein is Serine protease FAM111A.